Here is a 358-residue protein sequence, read N- to C-terminus: Aromatic amino acid aminotransferase (358 aa).

Lys-214 carries the N6-(pyridoxal phosphate)lysine modification.

It belongs to the class-II pyridoxal-phosphate-dependent aminotransferase family. As to quaternary structure, homodimer. Pyridoxal 5'-phosphate serves as cofactor.

The catalysed reaction is an aromatic L-alpha-amino acid + 2-oxoglutarate = an aromatic oxo-acid + L-glutamate. In terms of biological role, aminotransferase that catalyzes the conversion of aromatic amino acids and 2-oxoglutarate into corresponding aromatic oxo acids and L-glutamate. The protein is Aromatic amino acid aminotransferase of Rhodococcus opacus (strain B4).